The primary structure comprises 443 residues: Thymidine phosphorylase (443 aa).

It belongs to the thymidine/pyrimidine-nucleoside phosphorylase family. Homodimer.

The catalysed reaction is thymidine + phosphate = 2-deoxy-alpha-D-ribose 1-phosphate + thymine. It functions in the pathway pyrimidine metabolism; dTMP biosynthesis via salvage pathway; dTMP from thymine: step 1/2. The enzymes which catalyze the reversible phosphorolysis of pyrimidine nucleosides are involved in the degradation of these compounds and in their utilization as carbon and energy sources, or in the rescue of pyrimidine bases for nucleotide synthesis. In Shewanella baltica (strain OS185), this protein is Thymidine phosphorylase.